A 208-amino-acid chain; its full sequence is Small ribosomal subunit protein uS4 (208 aa).

The tract at residues 28–48 is disordered; sequence YFEKRPYPPGEHGRARRRTES. Residues 95–159 enclose the S4 RNA-binding domain; sequence MRLDALVLRS…ARTPFQVAAA (65 aa).

It belongs to the universal ribosomal protein uS4 family. Part of the 30S ribosomal subunit. Contacts protein S5. The interaction surface between S4 and S5 is involved in control of translational fidelity.

In terms of biological role, one of the primary rRNA binding proteins, it binds directly to 16S rRNA where it nucleates assembly of the body of the 30S subunit. Functionally, with S5 and S12 plays an important role in translational accuracy. The sequence is that of Small ribosomal subunit protein uS4 from Beutenbergia cavernae (strain ATCC BAA-8 / DSM 12333 / CCUG 43141 / JCM 11478 / NBRC 16432 / NCIMB 13614 / HKI 0122).